A 271-amino-acid chain; its full sequence is Phosphatidylglycerol--prolipoprotein diacylglyceryl transferase (271 aa).

A run of 4 helical transmembrane segments spans residues 25 to 45 (WYGI…KFFV), 60 to 80 (YFIW…ILIY), 103 to 123 (FVGI…IATL), and 131 to 151 (ANPW…YVFG). Residue Arg-152 coordinates a 1,2-diacyl-sn-glycero-3-phospho-(1'-sn-glycerol). 3 helical membrane-spanning segments follow: residues 181–201 (PSQL…VYLA), 209–229 (GELI…CEFY), and 235–255 (GIGF…IMFI).

It belongs to the Lgt family.

The protein localises to the cell inner membrane. It carries out the reaction L-cysteinyl-[prolipoprotein] + a 1,2-diacyl-sn-glycero-3-phospho-(1'-sn-glycerol) = an S-1,2-diacyl-sn-glyceryl-L-cysteinyl-[prolipoprotein] + sn-glycerol 1-phosphate + H(+). The protein operates within protein modification; lipoprotein biosynthesis (diacylglyceryl transfer). Functionally, catalyzes the transfer of the diacylglyceryl group from phosphatidylglycerol to the sulfhydryl group of the N-terminal cysteine of a prolipoprotein, the first step in the formation of mature lipoproteins. The protein is Phosphatidylglycerol--prolipoprotein diacylglyceryl transferase of Campylobacter jejuni (strain RM1221).